A 978-amino-acid chain; its full sequence is Glycine dehydrogenase (decarboxylating) (978 aa).

Lys726 bears the N6-(pyridoxal phosphate)lysine mark.

Belongs to the GcvP family. In terms of assembly, the glycine cleavage system is composed of four proteins: P, T, L and H. Requires pyridoxal 5'-phosphate as cofactor.

It catalyses the reaction N(6)-[(R)-lipoyl]-L-lysyl-[glycine-cleavage complex H protein] + glycine + H(+) = N(6)-[(R)-S(8)-aminomethyldihydrolipoyl]-L-lysyl-[glycine-cleavage complex H protein] + CO2. In terms of biological role, the glycine cleavage system catalyzes the degradation of glycine. The P protein binds the alpha-amino group of glycine through its pyridoxal phosphate cofactor; CO(2) is released and the remaining methylamine moiety is then transferred to the lipoamide cofactor of the H protein. This is Glycine dehydrogenase (decarboxylating) from Paraburkholderia xenovorans (strain LB400).